The primary structure comprises 103 residues: Small ribosomal subunit protein uS10 (103 aa).

This sequence belongs to the universal ribosomal protein uS10 family. As to quaternary structure, part of the 30S ribosomal subunit.

Involved in the binding of tRNA to the ribosomes. This chain is Small ribosomal subunit protein uS10, found in Desulfatibacillum aliphaticivorans.